A 434-amino-acid polypeptide reads, in one-letter code: MSAGTAADKHFSNSFFAAPLTEADPEIAEAVAKELGRQQHEIELIASENIVSRAVLEAQGSVLTNKYAEGYPGRRYYGGCQFVDIAEDLAIERAKRLFDCGFANVQPNSGSQANQGVFLALMQPGDTFLGLDLAAGGHLTHGAPPNVSGKWFKPVSYTVRREDQRIDMEQVAQLAQEHKPKVIIAGGSGYPRHWDFAKFREIADSVGAYFMVDMAHFAGLVAAGVHPSPFPHAHVATTTTHKTLRGPRGGMILTNDEALAKKFNSAIFPGLQGGPLMHVIAGKAVAFGEALKPEFKIYARQVVENARALADTLISGGYDITSGGTDNHLMLVDLQRKGLTGKAAEAALSRAHITCNKNGVPFDTQKPTITSGIRLGTPAGTSRGFGVAEFKQIGGFIVEVLDGLAAKGEAGDSAVEADVKTRVHALTDRFPIYG.

(6S)-5,6,7,8-tetrahydrofolate contacts are provided by residues Leu-133 and 137 to 139 (GHL). Residue Lys-242 is modified to N6-(pyridoxal phosphate)lysine.

The protein belongs to the SHMT family. As to quaternary structure, homodimer. The cofactor is pyridoxal 5'-phosphate.

The protein resides in the cytoplasm. The enzyme catalyses (6R)-5,10-methylene-5,6,7,8-tetrahydrofolate + glycine + H2O = (6S)-5,6,7,8-tetrahydrofolate + L-serine. It participates in one-carbon metabolism; tetrahydrofolate interconversion. The protein operates within amino-acid biosynthesis; glycine biosynthesis; glycine from L-serine: step 1/1. Its function is as follows. Catalyzes the reversible interconversion of serine and glycine with tetrahydrofolate (THF) serving as the one-carbon carrier. This reaction serves as the major source of one-carbon groups required for the biosynthesis of purines, thymidylate, methionine, and other important biomolecules. Also exhibits THF-independent aldolase activity toward beta-hydroxyamino acids, producing glycine and aldehydes, via a retro-aldol mechanism. The chain is Serine hydroxymethyltransferase from Methylobacterium radiotolerans (strain ATCC 27329 / DSM 1819 / JCM 2831 / NBRC 15690 / NCIMB 10815 / 0-1).